The sequence spans 226 residues: Putative N-acetylmannosamine-6-phosphate 2-epimerase (226 aa).

It belongs to the NanE family.

The enzyme catalyses an N-acyl-D-glucosamine 6-phosphate = an N-acyl-D-mannosamine 6-phosphate. It participates in amino-sugar metabolism; N-acetylneuraminate degradation; D-fructose 6-phosphate from N-acetylneuraminate: step 3/5. Functionally, converts N-acetylmannosamine-6-phosphate (ManNAc-6-P) to N-acetylglucosamine-6-phosphate (GlcNAc-6-P). This chain is Putative N-acetylmannosamine-6-phosphate 2-epimerase, found in Mycoplasma capricolum subsp. capricolum (strain California kid / ATCC 27343 / NCTC 10154).